A 387-amino-acid polypeptide reads, in one-letter code: BTB and MATH domain-containing protein 38 (387 aa).

Positions 79-204 (EGMLKLEIPN…NEMVTVTARV (126 aa)) constitute an MATH domain. Residues 228 to 295 (CDMTLVINKQ…IYPCHKPITS (68 aa)) enclose the BTB domain.

The chain is BTB and MATH domain-containing protein 38 (bath-38) from Caenorhabditis elegans.